We begin with the raw amino-acid sequence, 290 residues long: Poly-beta-1,6-N-acetyl-D-glucosamine N-deacetylase (290 aa).

The signal sequence occupies residues 1 to 28 (MKYRKLIILVLSILIILPVSTLDGHHIA). The region spanning 114 to 290 (RSVWINFDDM…KRWDGFHEKD (177 aa)) is the NodB homology domain.

Belongs to the polysaccharide deacetylase family.

It localises to the secreted. Its subcellular location is the cell wall. In terms of biological role, catalyzes the N-deacetylation of poly-beta-1,6-N-acetyl-D-glucosamine (PNAG, also referred to as PIA), a biofilm adhesin polysaccharide. N-deacetylation is crucial for attachment of the polysaccharide to the bacterial cell surface; it leads to the introduction of positive charges in the otherwise neutral PIA polymer, allowing electrostatic interactions. This chain is Poly-beta-1,6-N-acetyl-D-glucosamine N-deacetylase (icaB), found in Staphylococcus aureus (strain Mu50 / ATCC 700699).